Here is a 398-residue protein sequence, read N- to C-terminus: O-methyltransferase mpaG' (398 aa).

Position 144 (serine 144) interacts with (4E,8E)-10-(4,6-dihydroxy-7-methyl-3-oxo-1,3-dihydro-2-benzofuran-5-yl)-4,8-dimethyldeca-4,8-dienoate. Residue serine 144 coordinates 4-farnesyl-3,5-dihydroxy-6-methylphthalide. Serine 144 is a 6-O-desmethylmycophenolate binding site. Asparagine 197 is an S-adenosyl-L-homocysteine binding site. Position 199 (tyrosine 199) interacts with (4E,8E)-10-(4,6-dihydroxy-7-methyl-3-oxo-1,3-dihydro-2-benzofuran-5-yl)-4,8-dimethyldeca-4,8-dienoate. Position 199 (tyrosine 199) interacts with 4-farnesyl-3,5-dihydroxy-6-methylphthalide. Tyrosine 199 lines the 6-O-desmethylmycophenolate pocket. Residues tyrosine 203, aspartate 237, glycine 239, histidine 244, aspartate 245, aspartate 264, and arginine 265 each coordinate S-adenosyl-L-homocysteine. Aspartate 264 contributes to the S-adenosyl-L-methionine binding site. (4E,8E)-10-(4,6-dihydroxy-7-methyl-3-oxo-1,3-dihydro-2-benzofuran-5-yl)-4,8-dimethyldeca-4,8-dienoate is bound by residues arginine 265 and glutamine 267. Arginine 265 provides a ligand contact to 6-O-desmethylmycophenolate. Residues aspartate 286, isoleucine 287, and histidine 302 each coordinate S-adenosyl-L-homocysteine. Serine 303 is a binding site for (4E,8E)-10-(4,6-dihydroxy-7-methyl-3-oxo-1,3-dihydro-2-benzofuran-5-yl)-4,8-dimethyldeca-4,8-dienoate. Serine 303 contacts 4-farnesyl-3,5-dihydroxy-6-methylphthalide. Serine 303 lines the 6-O-desmethylmycophenolate pocket. Histidine 306 functions as the Proton acceptor in the catalytic mechanism. Catalysis depends on residues glutamate 335 and glutamate 362.

It belongs to the class I-like SAM-binding methyltransferase superfamily. Cation-independent O-methyltransferase family. In terms of assembly, homodimer.

It is found in the cytoplasm. It localises to the cytosol. The catalysed reaction is (4E,8E)-10-(4,6-dihydroxy-7-methyl-3-oxo-1,3-dihydro-2-benzofuran-5-yl)-4,8-dimethyldeca-4,8-dienoate + S-adenosyl-L-methionine = (4E,8E)-10-(4-hydroxy-6-methoxy-7-methyl-3-oxo-1,3-dihydro-2-benzofuran-5-yl)-4,8-dimethyldeca-4,8-dienoate + S-adenosyl-L-homocysteine + H(+). It carries out the reaction 4-farnesyl-3,5-dihydroxy-6-methylphthalide + S-adenosyl-L-methionine = 4-farnesyl-3,5-dihydroxy-6-methoxylphthalide + S-adenosyl-L-homocysteine + H(+). It catalyses the reaction 6-O-desmethylmycophenolate + S-adenosyl-L-methionine = mycophenolate + S-adenosyl-L-homocysteine + H(+). It functions in the pathway secondary metabolite biosynthesis; terpenoid biosynthesis. O-methyltransferase; part of the gene cluster that mediates the biosynthesis of mycophenolic acid (MPA), the first isolated antibiotic natural product in the world obtained from a culture of Penicillium brevicompactum in 1893. MpaG' catalyzes the 5-O-methylation of three precursors in MPA biosynthesis including demethylmycophenolic acid (DMMPA), 4-farnesyl-3,5-dihydroxy-6-methylphthalide (FDHMP), and an intermediate containing three fewer carbon atoms compared to FDHMP (FDHMP-3C) with different catalytic efficiencies. The first step of the pathway is the synthesis of 5-methylorsellinic acid (5MOA) by the cytosolic polyketide synthase mpaC. 5MOA is then converted to the phthalide compound 5,7-dihydroxy-4,6-dimethylphthalide (DHMP) by the endoplasmic reticulum-bound cytochrome P450 monooxygenase mpaDE. MpaDE first catalyzes hydroxylation of 5-MOA to 4,6-dihydroxy-2-(hydroxymethyl)-3-methylbenzoic acid (DHMB). MpaDE then acts as a lactone synthase that catalyzes the ring closure to convert DHMB into DHMP. The next step is the prenylation of DHMP by the Golgi apparatus-associated prenyltransferase mpaA to yield farnesyl-DHMP (FDHMP). The ER-bound oxygenase mpaB then mediates the oxidative cleavage the C19-C20 double bond in FDHMP to yield FDHMP-3C via a mycophenolic aldehyde intermediate. The O-methyltransferase mpaG catalyzes the methylation of FDHMP-3C to yield MFDHMP-3C. MpaG and mpaB can also switch the order in which they act and, in this case, the conversion of FDHMP to MFDHMP-3C can take place via 5-O-methyl-FDHMP (MFDHMP). After the cytosolic methylation of FDHMP-3C, MFDHMP-3C enters into peroxisomes probably via free diffusion due to its low molecular weight. Upon a peroxisomal CoA ligation reaction, catalyzed by a beta-oxidation component enzyme acyl-CoA ligase ACL891, MFDHMP-3C-CoA would then be restricted to peroxisomes for the following beta-oxidation pathway steps. The peroxisomal beta-oxidation machinery than converts MFDHMP-3C-CoA into MPA_CoA, via a beta-oxidation chain-shortening process. Finally mpaH acts as a peroxisomal acyl-CoA hydrolase with high substrate specificity toward MPA-CoA to release the final product MPA. MpaH can also hydrolyze DMMPA-CoA to release demethylmycophenolic acid (DMMPA) that is further converted to MPA by mpaG. This is O-methyltransferase mpaG' from Penicillium brevicompactum.